A 324-amino-acid polypeptide reads, in one-letter code: NAC domain-containing protein 30 (324 aa).

An NAC domain is found at 9–158 (MPPGFRFHPT…GWVVCRAFRK (150 aa)). Residues 109–164 (IGMRKTLVYYKGRAPNGRKSDWIMHEYRLQNSELAPVQEEGWVVCRAFRKPIPNQR) mediate DNA binding. The segment covering 232 to 244 (LPQLDSPSLSPSL) has biased composition (low complexity). Positions 232 to 259 (LPQLDSPSLSPSLGTNKDQNESFEQEEE) are disordered.

It belongs to the plant vascular related NAC-domain protein family. As to quaternary structure, forms homodimer and heterodimers with other VND proteins (e.g. NAC037/VND1, NAC076/VND2 and NAC105/VND3) via their N-termini. Interacts with NAC083/VNI2. Expressed in developing protoxylems in roots and shoots. Detected in root protoxylem poles and in vessels of protoxylems, outermost metaxylems, inner metaxylems, shoots and hypocotyls. Expressed in roots, hypocotyls, cotyledons and leaves. Accumulates in the xylem but not in interfascicular fibers or pith cells in inflorescence stems. Present in developing vessels of the secondary xylem in roots undergoing secondary growth.

The protein resides in the nucleus. Functionally, transcription activator that binds to the secondary wall NAC binding element (SNBE), 5'-(T/A)NN(C/T)(T/C/G)TNNNNNNNA(A/C)GN(A/C/T)(A/T)-3', in the promoter of target genes (e.g. genes involved in secondary wall biosynthesis, cell wall modification such as xylan accumulation, and programmed cell death). Involved in xylem formation in roots and shoots, especially regulating protoxylem vessel differentiation by promoting immature xylem vessel-specific genes expression. Can activate the expression of several genes including XCP1, MYB46, NAC010/SND3, MYB103, MYB58, MYB63, MYB83, KNAT7, ASL19 and ASL20. In terms of biological role, required for the soilborne fungal pathogen Verticillium longisporum-induced transdifferentiation of chloroplast-containing bundle sheath cells to functional xylem elements leading to stunted growth, vein clearing, and leaf chloroses, as well as xylem hyperplasia within the vasculature of leaves, hypocotyls, and roots due to reinitiation of cambial activity and transdifferentiation of xylem parenchyma cells. This developmental reprogramming also mediates an increased drought stress tolerance. The protein is NAC domain-containing protein 30 of Arabidopsis thaliana (Mouse-ear cress).